We begin with the raw amino-acid sequence, 329 residues long: Probable quinone oxidoreductase (329 aa).

Ser-191 is modified (phosphoserine).

The protein belongs to the zinc-containing alcohol dehydrogenase family. Quinone oxidoreductase subfamily.

It localises to the cytoplasm. Its subcellular location is the nucleus. It carries out the reaction 2 a quinone + NADPH + H(+) = 2 a 1,4-benzosemiquinone + NADP(+). The sequence is that of Probable quinone oxidoreductase (zta1) from Schizosaccharomyces pombe (strain 972 / ATCC 24843) (Fission yeast).